Here is a 618-residue protein sequence, read N- to C-terminus: UvrABC system protein C (618 aa).

The GIY-YIG domain maps to 20 to 98 (TAPGVYRMYA…IKSLSPRYNV (79 aa)). The 36-residue stretch at 207–242 (DQLGEEIMHSMQQASEALEFERAARLRDLLSSLRSM) folds into the UVR domain.

It belongs to the UvrC family. As to quaternary structure, interacts with UvrB in an incision complex.

Its subcellular location is the cytoplasm. In terms of biological role, the UvrABC repair system catalyzes the recognition and processing of DNA lesions. UvrC both incises the 5' and 3' sides of the lesion. The N-terminal half is responsible for the 3' incision and the C-terminal half is responsible for the 5' incision. The polypeptide is UvrABC system protein C (Xanthomonas campestris pv. campestris (strain B100)).